Consider the following 439-residue polypeptide: Lipid-A-disaccharide synthase (439 aa).

The protein belongs to the LpxB family.

The enzyme catalyses a lipid X + a UDP-2-N,3-O-bis[(3R)-3-hydroxyacyl]-alpha-D-glucosamine = a lipid A disaccharide + UDP + H(+). Its pathway is bacterial outer membrane biogenesis; LPS lipid A biosynthesis. Its function is as follows. Condensation of UDP-2,3-diacylglucosamine and 2,3-diacylglucosamine-1-phosphate to form lipid A disaccharide, a precursor of lipid A, a phosphorylated glycolipid that anchors the lipopolysaccharide to the outer membrane of the cell. This Xanthomonas axonopodis pv. citri (strain 306) protein is Lipid-A-disaccharide synthase.